We begin with the raw amino-acid sequence, 343 residues long: Dihydroorotate dehydrogenase (quinone) (343 aa).

Residues 61 to 65 (AGLDK) and threonine 85 each bind FMN. Lysine 65 contacts substrate. A substrate-binding site is contributed by 110–114 (NRMGF). Positions 138 and 171 each coordinate FMN. Residue asparagine 171 coordinates substrate. The Nucleophile role is filled by serine 174. Asparagine 176 is a substrate binding site. FMN contacts are provided by lysine 216 and threonine 244. 245-246 (NT) lines the substrate pocket. FMN contacts are provided by residues glycine 267, glycine 296, and 317-318 (YS).

The protein belongs to the dihydroorotate dehydrogenase family. Type 2 subfamily. Monomer. The cofactor is FMN.

It localises to the cell membrane. It carries out the reaction (S)-dihydroorotate + a quinone = orotate + a quinol. It participates in pyrimidine metabolism; UMP biosynthesis via de novo pathway; orotate from (S)-dihydroorotate (quinone route): step 1/1. Its function is as follows. Catalyzes the conversion of dihydroorotate to orotate with quinone as electron acceptor. The polypeptide is Dihydroorotate dehydrogenase (quinone) (Pseudomonas syringae pv. tomato (strain ATCC BAA-871 / DC3000)).